A 152-amino-acid chain; its full sequence is Psoriasis susceptibility 1 candidate gene 1 protein homolog (152 aa).

Residues 1–31 show a composition bias toward polar residues; that stretch reads MTCTDQKSHSQRALGTQTPALQGPQLLNTDP. 2 disordered regions span residues 1-39 and 132-152; these read MTCTDQKSHSQRALGTQTPALQGPQLLNTDPSSEETRPP and APTLLYSPPPSHSPFGLSSLI.

This Pan troglodytes (Chimpanzee) protein is Psoriasis susceptibility 1 candidate gene 1 protein homolog (PSORS1C1).